The sequence spans 582 residues: Pineapple eye protein (582 aa).

Residues 6–44 form a C2HC pre-PHD-type zinc finger; it reads ELQCLICKYSDTDDLVFGEWMIVRNLQVHYFCLLLSTHL. The tract at residues 6 to 119 is extended PHD domain (ePHD); sequence ELQCLICKYS…QYKSYCYKCR (114 aa). The PHD-type; atypical zinc finger occupies 72-119; sequence RKCWYCNKIGASLQCDRCRSLFHLKCGLENRAVFEFCGQYKSYCYKCR. Disordered regions lie at residues 292–311 and 323–422; these read PART…DGSF and RSLT…ASEI. Residues 340-363 show a composition bias toward polar residues; sequence SSNITVIFSQPKSNATSERLSLSP. Over residues 383 to 399 the composition is skewed to basic and acidic residues; it reads SIDENHSPQPIARRDTS.

Its function is as follows. Required for survival of imaginal disk cells possibly by regulation of cell apoptosis. Required for germline stem cell self-renewal through mediation of BMP signaling. The polypeptide is Pineapple eye protein (Drosophila melanogaster (Fruit fly)).